The following is a 252-amino-acid chain: 3-dehydroquinate dehydratase (252 aa).

3-dehydroquinate contacts are provided by residues Ser-21, 46–48 (EWR), and Arg-82. Residue His-143 is the Proton donor/acceptor of the active site. Lys-170 serves as the catalytic Schiff-base intermediate with substrate. Arg-213, Ser-232, and Gln-236 together coordinate 3-dehydroquinate.

It belongs to the type-I 3-dehydroquinase family. In terms of assembly, homodimer.

The catalysed reaction is 3-dehydroquinate = 3-dehydroshikimate + H2O. It functions in the pathway metabolic intermediate biosynthesis; chorismate biosynthesis; chorismate from D-erythrose 4-phosphate and phosphoenolpyruvate: step 3/7. Its function is as follows. Involved in the third step of the chorismate pathway, which leads to the biosynthesis of aromatic amino acids. Catalyzes the cis-dehydration of 3-dehydroquinate (DHQ) and introduces the first double bond of the aromatic ring to yield 3-dehydroshikimate. This is 3-dehydroquinate dehydratase from Salmonella paratyphi A (strain ATCC 9150 / SARB42).